The chain runs to 624 residues: E3 ubiquitin-protein ligase RLIM (624 aa).

Residue Met1 is modified to N-acetylmethionine. A compositionally biased stretch (basic and acidic residues) spans 1-11 (MENSDSNDKGS). 5 disordered regions span residues 1-25 (MENSDSNDKGSGDQSAAQRRSQMDR), 72-251 (KEGP…SQTF), 257-276 (NETEGSSRTRHHVTLRQQIS), 291-363 (TRNA…RGGF), and 424-522 (SDSE…TFDE). The segment covering 104–132 (SVRQTGNTTRSGQRGNQSWRAVSRTNPNS) has biased composition (polar residues). Positions 142–153 (NVNRNNGSQNSE) are enriched in low complexity. Ser164 carries the phosphoserine modification. The segment covering 165–188 (GENVENNSQRQVENPRSESTSARP) has biased composition (polar residues). A phosphoserine mark is found at Ser195, Ser228, Ser230, and Ser276. Positions 214-229 (RSPDHRRTRARAERSR) are enriched in basic and acidic residues. Residues 291–315 (TRNASQGAGSSDTAASGESTGSGQR) are compositionally biased toward polar residues. Basic and acidic residues predominate over residues 329 to 339 (RPGEYRQRDSI). The segment covering 340-356 (ASRTRSRSQTPNNTVTY) has biased composition (polar residues). Positions 445–454 (GRGGSGGGSS) are enriched in gly residues. Over residues 455 to 507 (SGSSSSSSSSSSSSSSSSSSSSPSSSSGGESSETSSDLFEGSNEGSSSSGSSG) the composition is skewed to low complexity. The RING-type zinc finger occupies 570–611 (CSVCITEYTEGNKLRKLPCSHEYHVHCIDRWLSENSTCPICR). The short motif at 621 to 624 (ESVV) is the PDZ-binding element.

Belongs to the RNF12 family. Interacts with LIM/homeobox factors such as LHX3. Interacts with LDB1, LDB2 and SIN3A. Interacts with LIMK1. Interacts (via N-terminus) with TERF1. Interacts (via C-terminus) with ESR1. As to expression, expressed in many tissues.

Its subcellular location is the nucleus. The enzyme catalyses S-ubiquitinyl-[E2 ubiquitin-conjugating enzyme]-L-cysteine + [acceptor protein]-L-lysine = [E2 ubiquitin-conjugating enzyme]-L-cysteine + N(6)-ubiquitinyl-[acceptor protein]-L-lysine.. It functions in the pathway protein modification; protein ubiquitination. Functionally, E3 ubiquitin-protein ligase. Acts as a negative coregulator for LIM homeodomain transcription factors by mediating the ubiquitination and subsequent degradation of LIM cofactors LDB1 and LDB2 and by mediating the recruitment the SIN3a/histone deacetylase corepressor complex. Ubiquitination and degradation of LIM cofactors LDB1 and LDB2 allows DNA-bound LIM homeodomain transcription factors to interact with other protein partners such as RLIM. Plays a role in telomere length-mediated growth suppression by mediating the ubiquitination and degradation of TERF1. By targeting ZFP42 for degradation, acts as an activator of random inactivation of X chromosome in the embryo, a stochastic process in which one X chromosome is inactivated to minimize sex-related dosage differences of X-encoded genes in somatic cells of female placental mammals. The sequence is that of E3 ubiquitin-protein ligase RLIM (RLIM) from Homo sapiens (Human).